The sequence spans 279 residues: Phospholipase A and acyltransferase 5 (279 aa).

2 disordered regions span residues 1–53 (MGLS…GLNS) and 70–117 (QLPA…ENEG). Polar residues predominate over residues 97-106 (LETTPSQKAD). Residues 135–249 (LIEIFRIGYE…LRYGVPRSQQ (115 aa)) form the LRAT domain. Active-site residues include His145 and His157. Catalysis depends on Cys233, which acts as the Acyl-thioester intermediate.

The protein belongs to the H-rev107 family. As to expression, highest expression level in testis and pancreas.

It is found in the cytoplasm. Its subcellular location is the cytosol. It carries out the reaction a 1,2-diacyl-sn-glycero-3-phosphocholine + H2O = a 1-acyl-sn-glycero-3-phosphocholine + a fatty acid + H(+). The enzyme catalyses a 1,2-diacyl-sn-glycero-3-phosphocholine + H2O = a 2-acyl-sn-glycero-3-phosphocholine + a fatty acid + H(+). The catalysed reaction is 1-hexadecanoyl-2-(5Z,8Z,11Z,14Z-eicosatetraenoyl)-sn-glycero-3-phosphocholine + 1,2-di-(9Z-octadecenoyl)-sn-glycero-3-phosphoethanolamine = N-(5Z,8Z,11Z,14Z-eicosatetraenoyl)-1,2-di-(9Z-octadecenoyl)-sn-glycero-3-phosphoethanolamine + 1-hexadecanoyl-sn-glycero-3-phosphocholine + H(+). It catalyses the reaction 1,2-di-(9Z-octadecenoyl)-sn-glycero-3-phosphoethanolamine + 1,2-dihexadecanoyl-sn-glycero-3-phosphocholine = N-hexadecanoyl-1,2-di-(9Z-octadecenoyl)-sn-glycero-3-phosphoethanolamine + 1-hexadecanoyl-sn-glycero-3-phosphocholine + H(+). It carries out the reaction 1,2-di-(9Z-octadecenoyl)-sn-glycero-3-phosphoethanolamine + 1,2-dihexadecanoyl-sn-glycero-3-phosphocholine = N-hexadecanoyl-1,2-di-(9Z-octadecenoyl)-sn-glycero-3-phosphoethanolamine + 2-hexadecanoyl-sn-glycero-3-phosphocholine + H(+). The enzyme catalyses a 1,2-diacyl-sn-glycero-3-phosphoethanolamine + a 1,2-diacyl-sn-glycero-3-phosphocholine = an N-acyl-1,2-diacyl-sn-glycero-3-phosphoethanolamine + a 1-acyl-sn-glycero-3-phosphocholine + H(+). The catalysed reaction is a 1,2-diacyl-sn-glycero-3-phosphoethanolamine + a 1,2-diacyl-sn-glycero-3-phosphocholine = an N-acyl-1,2-diacyl-sn-glycero-3-phosphoethanolamine + a 2-acyl-sn-glycero-3-phosphocholine + H(+). It catalyses the reaction 1-hexadecanoyl-2-(9Z-octadecenoyl)-sn-glycero-3-phosphocholine + 1,2-di-(9Z-octadecenoyl)-sn-glycero-3-phosphoethanolamine = N,1,2-tri-(9Z-octadecenoyl)-sn-glycero-3-phosphoethanolamine + 1-hexadecanoyl-sn-glycero-3-phosphocholine + H(+). Its function is as follows. Exhibits both phospholipase A1/2 and acyltransferase activities. Shows phospholipase A1 (PLA1) and A2 (PLA2) activity, catalyzing the calcium-independent release of fatty acids from the sn-1 or sn-2 position of glycerophospholipids. Shows N-acyltransferase activity, catalyzing the calcium-independent transfer of a fatty acyl group at the sn-1 position of phosphatidylcholine (PC) and other glycerophospholipids to the primary amine of phosphatidylethanolamine (PE), forming N-acylphosphatidylethanolamine (NAPE), which serves as precursor for N-acylethanolamines (NAEs). This chain is Phospholipase A and acyltransferase 5, found in Homo sapiens (Human).